A 143-amino-acid polypeptide reads, in one-letter code: MSLRHMSRRASRFGVVAVASIGLAAAAQSVAFAAPAFSVSPASGLSDGQSVSVSVSGAAAGETYYIAQCAPVGGQDACNPATATSFTTDASGAASFSFVVRKSYTGSTPEGTPVGSVDCATAACNLGAGNSGLDLGHVALTFG.

The signal sequence occupies residues 1–33 (MSLRHMSRRASRFGVVAVASIGLAAAAQSVAFA). Intrachain disulfides connect Cys-69–Cys-78 and Cys-119–Cys-124.

It belongs to the neocarzinostatin family.

Its function is as follows. Binds non-covalently to a chromophore which is the cytotoxic and mutagenic component of the antibiotic. The chromophore binds to DNA as a weak intercalator and causes single- and double-strand breaks. This chain is Antitumor antibiotic C-1027 apoprotein (cagA), found in Streptomyces globisporus.